Consider the following 308-residue polypeptide: Elongation factor Ts (308 aa).

Residues 80 to 83 (TDFV) are involved in Mg(2+) ion dislocation from EF-Tu.

The protein belongs to the EF-Ts family.

The protein localises to the cytoplasm. Its function is as follows. Associates with the EF-Tu.GDP complex and induces the exchange of GDP to GTP. It remains bound to the aminoacyl-tRNA.EF-Tu.GTP complex up to the GTP hydrolysis stage on the ribosome. In Rhodopseudomonas palustris (strain BisB18), this protein is Elongation factor Ts.